Here is a 130-residue protein sequence, read N- to C-terminus: UPF0225 protein DR_0483 (130 aa).

It belongs to the UPF0225 family.

The sequence is that of UPF0225 protein DR_0483 from Deinococcus radiodurans (strain ATCC 13939 / DSM 20539 / JCM 16871 / CCUG 27074 / LMG 4051 / NBRC 15346 / NCIMB 9279 / VKM B-1422 / R1).